We begin with the raw amino-acid sequence, 130 residues long: 3-aminoacrylate deaminase RutC (130 aa).

This sequence belongs to the RutC family.

The enzyme catalyses (Z)-3-aminoacrylate + H2O + H(+) = 3-oxopropanoate + NH4(+). In terms of biological role, involved in pyrimidine catabolism. Catalyzes the deamination of 3-aminoacrylate to malonic semialdehyde, a reaction that can also occur spontaneously. RutC may facilitate the reaction and modulate the metabolic fitness, rather than catalyzing essential functions. The protein is 3-aminoacrylate deaminase RutC of Methylorubrum extorquens (strain CM4 / NCIMB 13688) (Methylobacterium extorquens).